A 253-amino-acid polypeptide reads, in one-letter code: Ubiquinone/menaquinone biosynthesis C-methyltransferase UbiE (253 aa).

Residues Thr-76, Asp-97, 125–126 (NA), and Ser-142 contribute to the S-adenosyl-L-methionine site.

It belongs to the class I-like SAM-binding methyltransferase superfamily. MenG/UbiE family.

It carries out the reaction a 2-demethylmenaquinol + S-adenosyl-L-methionine = a menaquinol + S-adenosyl-L-homocysteine + H(+). The catalysed reaction is a 2-methoxy-6-(all-trans-polyprenyl)benzene-1,4-diol + S-adenosyl-L-methionine = a 5-methoxy-2-methyl-3-(all-trans-polyprenyl)benzene-1,4-diol + S-adenosyl-L-homocysteine + H(+). It functions in the pathway quinol/quinone metabolism; menaquinone biosynthesis; menaquinol from 1,4-dihydroxy-2-naphthoate: step 2/2. Its pathway is cofactor biosynthesis; ubiquinone biosynthesis. Its function is as follows. Methyltransferase required for the conversion of demethylmenaquinol (DMKH2) to menaquinol (MKH2) and the conversion of 2-polyprenyl-6-methoxy-1,4-benzoquinol (DDMQH2) to 2-polyprenyl-3-methyl-6-methoxy-1,4-benzoquinol (DMQH2). This chain is Ubiquinone/menaquinone biosynthesis C-methyltransferase UbiE, found in Xylella fastidiosa (strain 9a5c).